The chain runs to 117 residues: MARTKPGKTTRARHKKILKLAKGYYGARSKHFRPANETVMKALFYARRDRRQRKRNFRRLWIARINAAARMNGLTYSQFINGLNKAGVQLNRKVLADIAVNDAAGFSALVEKAKASL.

The protein belongs to the bacterial ribosomal protein bL20 family.

Binds directly to 23S ribosomal RNA and is necessary for the in vitro assembly process of the 50S ribosomal subunit. It is not involved in the protein synthesizing functions of that subunit. The protein is Large ribosomal subunit protein bL20 of Symbiobacterium thermophilum (strain DSM 24528 / JCM 14929 / IAM 14863 / T).